Reading from the N-terminus, the 239-residue chain is Probable 2-phosphosulfolactate phosphatase (239 aa).

Belongs to the ComB family. The cofactor is Mg(2+).

It carries out the reaction (2R)-O-phospho-3-sulfolactate + H2O = (2R)-3-sulfolactate + phosphate. This chain is Probable 2-phosphosulfolactate phosphatase, found in Clostridium botulinum (strain Langeland / NCTC 10281 / Type F).